Consider the following 240-residue polypeptide: uncharacterized protein (240 aa).

Residues 73–93 (LLGCLYFFIYFVAPTLGPVLF) form a helical membrane-spanning segment.

The protein belongs to the universal ribosomal protein uS3 family.

It localises to the mitochondrion membrane. This is an uncharacterized protein from Arabidopsis thaliana (Mouse-ear cress).